A 562-amino-acid chain; its full sequence is Isochorismate synthase 2, chloroplastic (562 aa).

Residues 1-55 constitute a chloroplast transit peptide; it reads MASLQCSFHFLGTNPKKYNPSSIFQSYSRTSFTKLSSRVSRQRFLRCTLSMNGCE.

Belongs to the isochorismate synthase family. It depends on Mg(2+) as a cofactor.

The protein resides in the plastid. It localises to the chloroplast. It carries out the reaction chorismate = isochorismate. Its pathway is siderophore biosynthesis; salicylate biosynthesis. Its function is as follows. Isochorismate synthase involved in the synthesis of salicylic acid (SA) required for both local and systemic acquired resistance (LAR and SAR) while SA synthesized through the phenylalanine ammonium lyase (PAL) pathway seems to potentiate plant cell death. Also involved in phylloquinone (vitamin K1) synthesis. Has no isochorismate pyruvate lyase (IPL) activity. In Arabidopsis thaliana (Mouse-ear cress), this protein is Isochorismate synthase 2, chloroplastic (ICS2).